A 90-amino-acid polypeptide reads, in one-letter code: uncharacterized protein (90 aa).

Residues 25 to 90 (GEAAYNSPTN…PPIAPPPILD (66 aa)) are disordered. 2 stretches are compositionally biased toward polar residues: residues 30-54 (NSPT…TESV) and 65-79 (NDQT…SNVN).

This is an uncharacterized protein from Bacillus subtilis (strain 168).